A 177-amino-acid chain; its full sequence is Glutathione peroxidase homolog (177 aa).

Cys-35 is an active-site residue.

Belongs to the glutathione peroxidase family.

Its function is as follows. Important in the cellular metabolism or defense processes particular to this pathogen. In Neisseria meningitidis serogroup A / serotype 4A (strain DSM 15465 / Z2491), this protein is Glutathione peroxidase homolog (gpxA).